Here is a 343-residue protein sequence, read N- to C-terminus: 3-dehydroquinate synthase (343 aa).

Residues 61–66, 95–96, 119–120, K132, K141, N142, and 159–162 each bind NAD(+); these read SGEKYK, GV, TT, and FLKT. Residues E174, H231, and H248 each contribute to the Zn(2+) site.

Belongs to the sugar phosphate cyclases superfamily. Dehydroquinate synthase family. As to quaternary structure, homodimer. The cofactor is NAD(+). Co(2+) serves as cofactor. Requires Zn(2+) as cofactor.

The protein resides in the cytoplasm. It catalyses the reaction 7-phospho-2-dehydro-3-deoxy-D-arabino-heptonate = 3-dehydroquinate + phosphate. The protein operates within metabolic intermediate biosynthesis; chorismate biosynthesis; chorismate from D-erythrose 4-phosphate and phosphoenolpyruvate: step 2/7. Catalyzes the conversion of 3-deoxy-D-arabino-heptulosonate 7-phosphate (DAHP) to dehydroquinate (DHQ). In Helicobacter pylori (strain ATCC 700392 / 26695) (Campylobacter pylori), this protein is 3-dehydroquinate synthase.